Reading from the N-terminus, the 379-residue chain is Flap endonuclease 1 (379 aa).

Residues 1–105 (MGVKGLNQLI…GELEKRLLRR (105 aa)) are N-domain. A Mg(2+)-binding site is contributed by aspartate 34. Residues arginine 47 and arginine 71 each coordinate DNA. Mg(2+) contacts are provided by aspartate 87, glutamate 159, glutamate 161, aspartate 180, and aspartate 182. Positions 123 to 254 (DMVRYEKRTV…VTAFKLIKEH (132 aa)) are I-domain. Glutamate 159 contributes to the DNA binding site. The DNA site is built by glycine 232 and aspartate 234. Residue aspartate 234 participates in Mg(2+) binding. The interval 341-349 (VQGRLDGFF) is interaction with PCNA. The interval 344–379 (RLDGFFQSVPKPKDSADKKRKNDTKSAKSKKAKTRK) is disordered. Residues 361 to 379 (KKRKNDTKSAKSKKAKTRK) are compositionally biased toward basic residues.

Belongs to the XPG/RAD2 endonuclease family. FEN1 subfamily. In terms of assembly, interacts with PCNA. Three molecules of FEN1 bind to one PCNA trimer with each molecule binding to one PCNA monomer. PCNA stimulates the nuclease activity without altering cleavage specificity. Requires Mg(2+) as cofactor. Phosphorylated. Phosphorylation upon DNA damage induces relocalization to the nuclear plasma.

The protein resides in the nucleus. It is found in the nucleolus. It localises to the nucleoplasm. Its subcellular location is the mitochondrion. Its function is as follows. Structure-specific nuclease with 5'-flap endonuclease and 5'-3' exonuclease activities involved in DNA replication and repair. During DNA replication, cleaves the 5'-overhanging flap structure that is generated by displacement synthesis when DNA polymerase encounters the 5'-end of a downstream Okazaki fragment. It enters the flap from the 5'-end and then tracks to cleave the flap base, leaving a nick for ligation. Also involved in the long patch base excision repair (LP-BER) pathway, by cleaving within the apurinic/apyrimidinic (AP) site-terminated flap. Acts as a genome stabilization factor that prevents flaps from equilibrating into structures that lead to duplications and deletions. Also possesses 5'-3' exonuclease activity on nicked or gapped double-stranded DNA, and exhibits RNase H activity. Also involved in replication and repair of rDNA and in repairing mitochondrial DNA. The protein is Flap endonuclease 1 of Debaryomyces hansenii (strain ATCC 36239 / CBS 767 / BCRC 21394 / JCM 1990 / NBRC 0083 / IGC 2968) (Yeast).